Consider the following 356-residue polypeptide: Methylthioribose-1-phosphate isomerase (356 aa).

D234 serves as the catalytic Proton donor.

Belongs to the eIF-2B alpha/beta/delta subunits family. MtnA subfamily.

The protein resides in the cytoplasm. Its subcellular location is the nucleus. The catalysed reaction is 5-(methylsulfanyl)-alpha-D-ribose 1-phosphate = 5-(methylsulfanyl)-D-ribulose 1-phosphate. It participates in amino-acid biosynthesis; L-methionine biosynthesis via salvage pathway; L-methionine from S-methyl-5-thio-alpha-D-ribose 1-phosphate: step 1/6. Catalyzes the interconversion of methylthioribose-1-phosphate (MTR-1-P) into methylthioribulose-1-phosphate (MTRu-1-P). The chain is Methylthioribose-1-phosphate isomerase (mri1) from Schizosaccharomyces japonicus (strain yFS275 / FY16936) (Fission yeast).